The following is a 27-amino-acid chain: Nucleoside diphosphate kinase 2 (27 aa).

Lysine 3 lines the ATP pocket.

The protein belongs to the NDK family. Mg(2+) is required as a cofactor.

The catalysed reaction is a 2'-deoxyribonucleoside 5'-diphosphate + ATP = a 2'-deoxyribonucleoside 5'-triphosphate + ADP. It carries out the reaction a ribonucleoside 5'-diphosphate + ATP = a ribonucleoside 5'-triphosphate + ADP. In terms of biological role, major role in the synthesis of nucleoside triphosphates other than ATP. The ATP gamma phosphate is transferred to the NDP beta phosphate via a ping-pong mechanism, using a phosphorylated active-site intermediate. The sequence is that of Nucleoside diphosphate kinase 2 from Pseudotsuga menziesii (Douglas-fir).